A 209-amino-acid chain; its full sequence is Response regulator protein VraR (209 aa).

The 117-residue stretch at 4–120 (KVLFVDDHEM…DIADAVRKTS (117 aa)) folds into the Response regulatory domain. D55 carries the post-translational modification 4-aspartylphosphate. The HTH luxR-type domain occupies 141–206 (RAELYEMLTE…QAVIYAFQHN (66 aa)). The H-T-H motif DNA-binding region spans 165–184 (NQEIASASHITIKTVKTHVS).

In terms of assembly, homodimer. Post-translationally, phosphorylated by VraS. Phosphorylation state of VraR controls dimerization of the protein.

Member of the two-component regulatory system VraS/VraR involved in the control of the cell wall peptidoglycan biosynthesis. Upon cellular stress, the histidine kinase VraS transfers the phosphoryl group onto VraR. Upon phosphorylation, VraR dimerizes at the N-terminal domain. In turn, phosphorylation-induced dimerization expand and enhance the VraR binding to its own promoter leading to increased expression and subsequent modulation of as many as 40 genes, which ultimately constitute the S.aureus response to cell wall damage. In addition, inhibits the host autophagic flux and delays the early stage of autophagosome formation, thereby promoting bacterial survival. Facilitates the ability of S.aureus to resist host polymorphonuclear leukocytes-mediated phagocytosis and killing thus contributing to immune evasion. In Staphylococcus aureus (strain NCTC 8325 / PS 47), this protein is Response regulator protein VraR (vraR).